Consider the following 323-residue polypeptide: Lipoyl synthase (323 aa).

Positions 61, 66, 72, 87, 91, 94, and 300 each coordinate [4Fe-4S] cluster. Positions 73 to 289 (WDKKHATFMI…ETVAYSKGFL (217 aa)) constitute a Radical SAM core domain.

This sequence belongs to the radical SAM superfamily. Lipoyl synthase family. [4Fe-4S] cluster is required as a cofactor.

The protein resides in the cytoplasm. It carries out the reaction [[Fe-S] cluster scaffold protein carrying a second [4Fe-4S](2+) cluster] + N(6)-octanoyl-L-lysyl-[protein] + 2 oxidized [2Fe-2S]-[ferredoxin] + 2 S-adenosyl-L-methionine + 4 H(+) = [[Fe-S] cluster scaffold protein] + N(6)-[(R)-dihydrolipoyl]-L-lysyl-[protein] + 4 Fe(3+) + 2 hydrogen sulfide + 2 5'-deoxyadenosine + 2 L-methionine + 2 reduced [2Fe-2S]-[ferredoxin]. Its pathway is protein modification; protein lipoylation via endogenous pathway; protein N(6)-(lipoyl)lysine from octanoyl-[acyl-carrier-protein]: step 2/2. Its function is as follows. Catalyzes the radical-mediated insertion of two sulfur atoms into the C-6 and C-8 positions of the octanoyl moiety bound to the lipoyl domains of lipoate-dependent enzymes, thereby converting the octanoylated domains into lipoylated derivatives. In Rhizobium leguminosarum bv. trifolii (strain WSM2304), this protein is Lipoyl synthase.